We begin with the raw amino-acid sequence, 207 residues long: Segregation and condensation protein B (207 aa).

Positions 173 to 207 (DDTAESDNDSADLYYRQFEQTLNETGPETAPKGEQ) are disordered.

The protein belongs to the ScpB family. As to quaternary structure, homodimer. Homodimerization may be required to stabilize the binding of ScpA to the Smc head domains. Component of a cohesin-like complex composed of ScpA, ScpB and the Smc homodimer, in which ScpA and ScpB bind to the head domain of Smc. The presence of the three proteins is required for the association of the complex with DNA.

It is found in the cytoplasm. Its function is as follows. Participates in chromosomal partition during cell division. May act via the formation of a condensin-like complex containing Smc and ScpA that pull DNA away from mid-cell into both cell halves. In Latilactobacillus sakei subsp. sakei (strain 23K) (Lactobacillus sakei subsp. sakei), this protein is Segregation and condensation protein B.